The chain runs to 176 residues: Inorganic pyrophosphatase (176 aa).

Residues Lys30, Arg44, and Tyr56 each contribute to the substrate site. Asp66, Asp71, and Asp103 together coordinate Mg(2+). Tyr142 provides a ligand contact to substrate.

It belongs to the PPase family. As to quaternary structure, homohexamer. Mg(2+) is required as a cofactor.

It is found in the cytoplasm. The catalysed reaction is diphosphate + H2O = 2 phosphate + H(+). Catalyzes the hydrolysis of inorganic pyrophosphate (PPi) forming two phosphate ions. In Brucella melitensis biotype 1 (strain ATCC 23456 / CCUG 17765 / NCTC 10094 / 16M), this protein is Inorganic pyrophosphatase.